The chain runs to 114 residues: UPF0342 protein NT01CX_2274 (114 aa).

This sequence belongs to the UPF0342 family.

The protein is UPF0342 protein NT01CX_2274 of Clostridium novyi (strain NT).